The following is a 1287-amino-acid chain: DENN domain-containing protein 5A (1287 aa).

One can recognise a uDENN domain in the interval 57 to 259 (STTEGENFEQ…EVPLPPPGRS (203 aa)). Ser193 is subject to Phosphoserine. Residues 278–414 (ELPLFDFPVK…LEFVQEVSEI (137 aa)) form the cDENN domain. The dDENN domain maps to 416–598 (MAFGVPPEGN…IMCHDDDDKD (183 aa)). One can recognise an RUN 1 domain in the interval 787 to 950 (VEENTLIASL…DYFCFTNVFT (164 aa)). In terms of domain architecture, PLAT spans 954–1062 (IPYHILIVPS…DDGSLERVLV (109 aa)). Thr1079 is subject to Phosphothreonine. Ser1085, Ser1087, and Ser1096 each carry phosphoserine. The RUN 2 domain occupies 1134–1280 (TLLLCGECGL…QEFNITLDTS (147 aa)).

It belongs to the RAB6IP1 family. As to quaternary structure, interacts with RAB6A bound to GTP. As to expression, expressed in developing brain and developing neurons.

It is found in the golgi apparatus membrane. Its function is as follows. Guanine nucleotide exchange factor (GEF) which may activate RAB6A and RAB39A and/or RAB39B. Promotes the exchange of GDP to GTP, converting inactive GDP-bound Rab proteins into their active GTP-bound form. Involved in the negative regulation of neurite outgrowth. The protein is DENN domain-containing protein 5A (Dennd5a) of Rattus norvegicus (Rat).